The primary structure comprises 257 residues: MSVPLILTILAGAATFIGAFLGVLGQKPSNRLLAFSLGFAAGIMLLISLMEMLPAALAAEGMSPVLGYGMFIFGLLGYFGLDRMLPHAHPQDLMQKSVQPLPKSIKRTAILLTLGISLHNFPEGIATFVTASSNLELGFGIALAVALHNIPEGLAVAGPVYAATGSKRTAILWAGISGLAEILGGVLAWLILGSMISPVVMAAIMAAVAGIMVALSVDELMPLAKEIDPNNNPSYGVLCGMSVMGFSLVLLQTAGIG.

The next 3 membrane-spanning stretches (helical) occupy residues 5–25, 32–52, and 61–81; these read LILTILAGAATFIGAFLGVLG, LLAFSLGFAAGIMLLISLMEM, and GMSPVLGYGMFIFGLLGYFGL. N120 and E123 together coordinate Fe(2+). Zn(2+)-binding residues include E123 and H148. The next 4 helical transmembrane spans lie at 137-157, 171-191, 195-215, and 236-256; these read LGFGIALAVALHNIPEGLAVA, ILWAGISGLAEILGGVLAWLI, MISPVVMAAIMAAVAGIMVAL, and GVLCGMSVMGFSLVLLQTAGI. Fe(2+) contacts are provided by N149, E152, and E181. A Zn(2+)-binding site is contributed by E152.

It belongs to the ZIP transporter (TC 2.A.5) family. ZupT subfamily.

Its subcellular location is the cell inner membrane. It carries out the reaction Zn(2+)(in) = Zn(2+)(out). Mediates zinc uptake. May also transport other divalent cations. In Escherichia coli O45:K1 (strain S88 / ExPEC), this protein is Zinc transporter ZupT.